Reading from the N-terminus, the 209-residue chain is Translation initiation factor 2 subunit beta (209 aa).

One can recognise a TRAM domain in the interval 144–202 (TIEEGKEYVVEITEVGSSGEGRTNYKGYTIFVPGAKRGETVKVRIKKVKNDVAIGEIIE).

It belongs to the eIF-2-beta/eIF-5 family. In terms of assembly, heterotrimer composed of an alpha, a beta and a gamma chain.

EIF-2 functions in the early steps of protein synthesis by forming a ternary complex with GTP and initiator tRNA. This chain is Translation initiation factor 2 subunit beta (eif2b), found in Thermoplasma acidophilum (strain ATCC 25905 / DSM 1728 / JCM 9062 / NBRC 15155 / AMRC-C165).